The following is a 339-amino-acid chain: Methylcobamide:CoM methyltransferase MtbA (339 aa).

Residues histidine 239, cysteine 241, and cysteine 316 each contribute to the Zn(2+) site.

This sequence belongs to the uroporphyrinogen decarboxylase family. MtbA/MtaA subfamily. Requires Zn(2+) as cofactor.

It catalyses the reaction methyl-Co(III)-[methylamine-specific corrinoid protein] + coenzyme M = Co(I)-[methylamine-specific corrinoid protein] + methyl-coenzyme M + H(+). Its pathway is one-carbon metabolism; methanogenesis from methylated amine. Methyltransferase involved in methanogenesis from methylamines methanol pathway. Catalyzes the transfer of the methyl group from the methylated corrinoid protein MtmC (MtmC1 or MtmC2) to coenzyme M, forming the substrate for coenzyme-B sulfoethylthiotransferase. This chain is Methylcobamide:CoM methyltransferase MtbA (mtbA), found in Methanosarcina acetivorans (strain ATCC 35395 / DSM 2834 / JCM 12185 / C2A).